The sequence spans 173 residues: Photosystem I assembly protein Ycf3 (173 aa).

TPR repeat units lie at residues 35–68 (AYVYYRDGLSAQNDGDYAEALENYDEALKLEDNP), 72–105 (GETLKNMAIIYMSNGEEERAIETYRRALDENSNQ), and 120–153 (GRIAEEDGRQDDADRWFDQAAEAWTQAVRLNPGG).

It belongs to the Ycf3 family.

The protein localises to the cellular thylakoid membrane. Functionally, essential for the assembly of the photosystem I (PSI) complex. May act as a chaperone-like factor to guide the assembly of the PSI subunits. The protein is Photosystem I assembly protein Ycf3 of Parasynechococcus marenigrum (strain WH8102).